We begin with the raw amino-acid sequence, 342 residues long: tRNA N6-adenosine threonylcarbamoyltransferase (342 aa).

Residues H119 and H123 each contribute to the Fe cation site. Substrate contacts are provided by residues 142-146 (VVSGG), D175, G188, and N282. Position 310 (D310) interacts with Fe cation.

Belongs to the KAE1 / TsaD family. The cofactor is Fe(2+).

The protein localises to the cytoplasm. It carries out the reaction L-threonylcarbamoyladenylate + adenosine(37) in tRNA = N(6)-L-threonylcarbamoyladenosine(37) in tRNA + AMP + H(+). In terms of biological role, required for the formation of a threonylcarbamoyl group on adenosine at position 37 (t(6)A37) in tRNAs that read codons beginning with adenine. Is involved in the transfer of the threonylcarbamoyl moiety of threonylcarbamoyl-AMP (TC-AMP) to the N6 group of A37, together with TsaE and TsaB. TsaD likely plays a direct catalytic role in this reaction. The protein is tRNA N6-adenosine threonylcarbamoyltransferase of Moorella thermoacetica (strain ATCC 39073 / JCM 9320).